A 299-amino-acid chain; its full sequence is Oxygen-dependent coproporphyrinogen-III oxidase (299 aa).

Serine 92 serves as a coordination point for substrate. A divalent metal cation contacts are provided by histidine 96 and histidine 106. Histidine 106 functions as the Proton donor in the catalytic mechanism. Residue 108–110 coordinates substrate; that stretch reads NVR. The a divalent metal cation site is built by histidine 145 and histidine 175. The tract at residues 239 to 274 is important for dimerization; sequence YVEFNLVYDRGTLFGLQSGGRAESILMSLPPQVRWE. Residue 257-259 coordinates substrate; it reads GGR.

The protein belongs to the aerobic coproporphyrinogen-III oxidase family. In terms of assembly, homodimer. Requires a divalent metal cation as cofactor.

It is found in the cytoplasm. The catalysed reaction is coproporphyrinogen III + O2 + 2 H(+) = protoporphyrinogen IX + 2 CO2 + 2 H2O. It functions in the pathway porphyrin-containing compound metabolism; protoporphyrin-IX biosynthesis; protoporphyrinogen-IX from coproporphyrinogen-III (O2 route): step 1/1. Functionally, involved in the heme biosynthesis. Catalyzes the aerobic oxidative decarboxylation of propionate groups of rings A and B of coproporphyrinogen-III to yield the vinyl groups in protoporphyrinogen-IX. The polypeptide is Oxygen-dependent coproporphyrinogen-III oxidase (Xanthomonas campestris pv. campestris (strain B100)).